We begin with the raw amino-acid sequence, 360 residues long: Glyceraldehyde-3-phosphate dehydrogenase (360 aa).

NAD(+)-binding positions include 13 to 14 (RI), D35, and R82. D-glyceraldehyde 3-phosphate contacts are provided by residues 153–155 (SCT), T184, 213–214 (TG), and R236. C154 acts as the Nucleophile in catalysis. N318 contacts NAD(+).

The protein belongs to the glyceraldehyde-3-phosphate dehydrogenase family. Homotetramer.

It carries out the reaction D-glyceraldehyde 3-phosphate + phosphate + NAD(+) = (2R)-3-phospho-glyceroyl phosphate + NADH + H(+). It participates in carbohydrate degradation; glycolysis; pyruvate from D-glyceraldehyde 3-phosphate: step 1/5. Key enzyme in glycolysis that catalyzes the first step of the pathway by converting D-glyceraldehyde 3-phosphate (G3P) into 3-phospho-D-glyceroyl phosphate. Essential for the maintenance of cellular ATP levels and carbohydrate metabolism. The chain is Glyceraldehyde-3-phosphate dehydrogenase from Atriplex nummularia (Old man saltbush).